The following is a 489-amino-acid chain: Probable transporter MCH1 (489 aa).

Helical transmembrane passes span 30-50 (IAYIFALFAAITSGFVSLISL), 68-88 (MIVTVINMGMYLTPPILGIIA), and 92-112 (GPITLSLSSVLGFIPSYAYLA). N-linked (GlcNAc...) asparagine glycosylation is present at asparagine 123. The next 8 membrane-spanning stretches (helical) occupy residues 132-152 (TLVCFFIIGVATSGLYFSALI), 163-183 (LLSISIPTTCYGLSSLIGSQF), 202-222 (VFKAFAWIYTVIGVMIWIATS), 279-299 (VLYIFGATIFCALGPLEMFIA), 307-327 (VLAGGHEPAMSSALLSIYALT), 351-371 (WILLLFLVVGLVTQGKIYMLS), 388-408 (FYIGIMQGIAYGGLFTIYPTI), and 421-441 (AYGTLMIAPALGSALSCLIYA). Asparagine 450 carries N-linked (GlcNAc...) asparagine glycosylation. Residues 462-482 (ETTALEFCAAILLTVVVTVLW) form a helical membrane-spanning segment.

It belongs to the major facilitator superfamily.

The protein resides in the vacuole membrane. Functionally, probable transporter. In Candida glabrata (strain ATCC 2001 / BCRC 20586 / JCM 3761 / NBRC 0622 / NRRL Y-65 / CBS 138) (Yeast), this protein is Probable transporter MCH1 (MCH1).